We begin with the raw amino-acid sequence, 363 residues long: Cytochrome c oxidase subunit 2 (363 aa).

The interval 1–23 is disordered; that stretch reads MTPRGPGRLQRLSQCRPQRGSGG. An N-terminal signal peptide occupies residues 1–41; that stretch reads MTPRGPGRLQRLSQCRPQRGSGGPARGLRQLALAAMLGALA. The next 2 membrane-spanning stretches (helical) occupy residues 71–91 and 118–138; these read LWIG…GLIF and LVLT…TVVV. Cu cation contacts are provided by His-254, Cys-295, Cys-299, and His-303.

This sequence belongs to the cytochrome c oxidase subunit 2 family. It depends on Cu cation as a cofactor. Requires heme as cofactor.

It is found in the cell membrane. It carries out the reaction 4 Fe(II)-[cytochrome c] + O2 + 8 H(+)(in) = 4 Fe(III)-[cytochrome c] + 2 H2O + 4 H(+)(out). In terms of biological role, subunits I and II form the functional core of the enzyme complex. Electrons originating in cytochrome c are transferred via heme a and Cu(A) to the binuclear center formed by heme a3 and Cu(B). This is Cytochrome c oxidase subunit 2 (ctaC) from Mycobacterium bovis (strain ATCC BAA-935 / AF2122/97).